The following is a 219-amino-acid chain: Beta-crystallin B2 (219 aa).

N-acetylalanine is present on Ala-2. Positions 2-16 are N-terminal arm; it reads ASEHQMPASKQQPAS. Beta/gamma crystallin 'Greek key' domains follow at residues 17 to 56 and 57 to 101; these read PNIAIFEQENFQGRCHELSGACPNLKDAGVDKVGSILVHS and GPWV…RPIK. Positions 102–120 are connecting peptide; sequence VVRAPRQPLPTRQTKDSQE. 2 Beta/gamma crystallin 'Greek key' domains span residues 121-162 and 163-205; these read HKIV…RVQS and GTWV…RRIR. Residues 207–219 form a C-terminal arm region; the sequence is MQWHQRGAYHPSN.

The protein belongs to the beta/gamma-crystallin family. In terms of assembly, homo/heterodimer, or complexes of higher-order. The structure of beta-crystallin oligomers seems to be stabilized through interactions between the N-terminal arms.

In terms of biological role, crystallins are the dominant structural components of the vertebrate eye lens. This Gallus gallus (Chicken) protein is Beta-crystallin B2 (CRYBB2).